Here is a 531-residue protein sequence, read N- to C-terminus: Pyruvate kinase (531 aa).

Residue Arg86 participates in substrate binding. K(+) contacts are provided by Asn88, Ser90, Asp121, and Thr122. 88-91 (NFSH) serves as a coordination point for ATP. Arg128 and Lys211 together coordinate ATP. Mg(2+) is bound at residue Glu277. The substrate site is built by Gly300, Asp301, and Thr333. Asp301 is a Mg(2+) binding site.

The protein belongs to the pyruvate kinase family. In terms of assembly, homotetramer. It depends on Mg(2+) as a cofactor. K(+) serves as cofactor.

It carries out the reaction pyruvate + ATP = phosphoenolpyruvate + ADP + H(+). It participates in carbohydrate degradation; glycolysis; pyruvate from D-glyceraldehyde 3-phosphate: step 5/5. This Eimeria tenella (Coccidian parasite) protein is Pyruvate kinase (PYK).